The sequence spans 489 residues: Long chain base biosynthesis protein 2b (489 aa).

The helical transmembrane segment at Ile-2–Phe-22 threads the bilayer. Lys-311 carries the post-translational modification N6-(pyridoxal phosphate)lysine.

The protein belongs to the class-II pyridoxal-phosphate-dependent aminotransferase family. As to quaternary structure, heterodimer with LCB1. Component of the serine palmitoyltransferase (SPT) complex, composed of LCB1 and LCB2 (LCB2a or LCB2b). Pyridoxal 5'-phosphate is required as a cofactor. In terms of tissue distribution, ubiquitous with the highest expression in flowers.

It is found in the endoplasmic reticulum membrane. It carries out the reaction L-serine + hexadecanoyl-CoA + H(+) = 3-oxosphinganine + CO2 + CoA. It functions in the pathway lipid metabolism; sphingolipid metabolism. In terms of biological role, serine palmitoyltransferase (SPT). The heterodimer formed with LCB1 constitutes the catalytic core. Plays an important role during male gametogenesis and embryogenesis. The sequence is that of Long chain base biosynthesis protein 2b (LCB2b) from Arabidopsis thaliana (Mouse-ear cress).